The primary structure comprises 422 residues: BTB/POZ domain-containing protein KCTD18 (422 aa).

The BTB domain maps to 12-80 (DILRLNVGGC…YLHGEVHIPT (69 aa)). 2 disordered regions span residues 289-357 (VKNS…THLP) and 376-422 (LRRT…DQTK). Over residues 396–406 (PAGPPEPPPDA) the composition is skewed to pro residues. A compositionally biased stretch (polar residues) spans 413–422 (WTENGQDQTK).

The polypeptide is BTB/POZ domain-containing protein KCTD18 (KCTD18) (Bos taurus (Bovine)).